The following is a 522-amino-acid chain: MTIRKSNPYLSLVNSYLMDSPQPSSMNYWWNVGSLLGLCLVMQMASGMFLAMHYSSSMELAFNSVEHMMRDVNAGWLMRYIHANGASFFFMCLYLHMGKALYYGSYKSPRVLVWSMGVMMFMLTMATAFMGYCLVYGQMSHWGATVITNLLSAMPFMGGDLVPLSIILSLYLLYISLKTFMKMIFNQSYMCPAKGWVKKVLDNTFCIKKYMHMYLSSRTSPXLYINTMSNMQHMKIMSTKSHTKDRDTSFLEKDIKNMDRNLLALMVGFMDGDGYIRMNKKSKDNMNYIYMSLIMNLNKNDLKLLQYFHQQLNMGKVYNMTPKKGNKLARWEMNKLDLFNKMEPLLEYHNMKFLTETRQKQYLLLKYIKHNKLVYYEDIINNNNYINEFIENNTLMDNFIKLDYFNNWLVGFTMAEGSFLIKKNKDICFQLKQKYNLELFNNMTLFFNTTRKLNINKNKYMQFNVSSKNDIQNMINFFSFSNNQPLLGNKLISYNKWLFTIKNSMRYKELKTPYMSWHQKEQ.

At 1–31 the chain is on the mitochondrial matrix side; the sequence is MTIRKSNPYLSLVNSYLMDSPQPSSMNYWWN. Residues 1-163 are cytochrome b; the sequence is MTIRKSNPYL…MPFMGGDLVP (163 aa). The chain crosses the membrane as a helical span at residues 32-52; it reads VGSLLGLCLVMQMASGMFLAM. The Mitochondrial intermembrane portion of the chain corresponds to 53–84; that stretch reads HYSSSMELAFNSVEHMMRDVNAGWLMRYIHAN. The chain crosses the membrane as a helical span at residues 85-105; the sequence is GASFFFMCLYLHMGKALYYGS. At 106–110 the chain is on the mitochondrial matrix side; it reads YKSPR. Residues 111–131 traverse the membrane as a helical segment; the sequence is VLVWSMGVMMFMLTMATAFMG. Topologically, residues 132–154 are mitochondrial intermembrane; sequence YCLVYGQMSHWGATVITNLLSAM. The helical transmembrane segment at 155–175 threads the bilayer; that stretch reads PFMGGDLVPLSIILSLYLLYI. Residues 164–522 are maturase; that stretch reads LSIILSLYLL…PYMSWHQKEQ (359 aa). Residues 176–522 are Mitochondrial matrix-facing; that stretch reads SLKTFMKMIF…PYMSWHQKEQ (347 aa).

This sequence in the N-terminal section; belongs to the cytochrome b family. In the C-terminal section; belongs to the LAGLIDADG endonuclease family.

The protein resides in the mitochondrion inner membrane. Functionally, mitochondrial mRNA maturase required for splicing of intron 3 of the cytochrome b (COB) gene, containing its own coding sequence. This chain is Cytochrome b mRNA maturase bI3 (bI3), found in Debaryomyces hansenii (strain ATCC 36239 / CBS 767 / BCRC 21394 / JCM 1990 / NBRC 0083 / IGC 2968) (Yeast).